A 758-amino-acid chain; its full sequence is Dachshund homolog 1 (758 aa).

Disordered regions lie at residues 1 to 105 (MAVP…SNCN) and 134 to 185 (INAS…TPQN). The segment covering 20–53 (ISTSASSSGTTTSTSSATSSPAPSIGPPASSGPT) has biased composition (low complexity). Gly residues predominate over residues 73-102 (TGGGGGGGGSGGGGGSSGNGGGGGGGGGGS). Residues 140–163 (SSSSSSSSSSSSSSSSSSSSSSSS) are compositionally biased toward low complexity. Residues 174-185 (STPSPVENTPQN) show a composition bias toward polar residues. A DACHbox-N region spans residues 189-275 (KMVDLRGAKV…LISRKDFETL (87 aa)). Positions 189 to 384 (KMVDLRGAKV…VGSSDGSWDK (196 aa)) are interaction with SIX6 and HDAC3. 4 disordered regions span residues 280 to 302 (TNASSRPGRPPKRTQSVTSPENS), 358 to 414 (SNNQ…PLSH), 474 to 532 (SPPS…RIPV), and 544 to 564 (MGLSPNVLPGPKEGDLAGHDM). Composition is skewed to polar residues over residues 292–301 (RTQSVTSPEN), 358–380 (SNNQHGADSENGDMNSSVGSSDG), and 387–399 (LPSSPSQGPQASI). Ser491 bears the Phosphoserine mark. The segment covering 506–524 (SHPSSHRSSSVSSSPARTE) has biased composition (low complexity). Over residues 555–564 (KEGDLAGHDM) the composition is skewed to basic and acidic residues. A DACHbox-C region spans residues 616 to 696 (SSIETLLTNI…KAKRKLQEAL (81 aa)). Residues 627–706 (GLLKVAIDNA…EFETKRREQA (80 aa)) form an interaction with SIN3A region. Residues 630–718 (KVAIDNARAQ…TLKQAASTDS (89 aa)) adopt a coiled-coil conformation.

It belongs to the DACH/dachshund family. As to quaternary structure, interacts with SIX1, SIX6 and EYA3. Interacts with NCOR1 and HDAC3 through its N-terminus. Interacts with SIN3A through its C-terminus. Interacts with SMAD3 and SMAD4. Widely expressed. Isoform 2 is found in brain, heart, kidney, liver, leukocytes and spleen. Isoform 3 is found in liver and heart. Isoform 4 is found in spleen.

It localises to the nucleus. In terms of biological role, transcription factor that is involved in regulation of organogenesis. Seems to be a regulator of SIX1, SIX6 and probably SIX5. Corepression of precursor cell proliferation in myoblasts by SIX1 is switched to coactivation through recruitment of EYA3 to the SIX1-DACH1 complex. Transcriptional activation also seems to involve association of CREBBP. Seems to act as a corepressor of SIX6 in regulating proliferation by directly repressing cyclin-dependent kinase inhibitors, including the p27Kip1 promoter. Inhibits TGF-beta signaling through interaction with SMAD4 and NCOR1. Binds to chromatin DNA via its DACHbox-N domain. The chain is Dachshund homolog 1 (DACH1) from Homo sapiens (Human).